The following is a 251-amino-acid chain: Malonyl-[acyl-carrier protein] O-methyltransferase (251 aa).

This sequence belongs to the methyltransferase superfamily.

The catalysed reaction is malonyl-[ACP] + S-adenosyl-L-methionine = malonyl-[ACP] methyl ester + S-adenosyl-L-homocysteine. Its pathway is cofactor biosynthesis; biotin biosynthesis. In terms of biological role, converts the free carboxyl group of a malonyl-thioester to its methyl ester by transfer of a methyl group from S-adenosyl-L-methionine (SAM). It allows to synthesize pimeloyl-ACP via the fatty acid synthetic pathway. The chain is Malonyl-[acyl-carrier protein] O-methyltransferase from Pseudescherichia vulneris (Escherichia vulneris).